The following is a 498-amino-acid chain: Myocyte-specific enhancer factor 2D homolog (498 aa).

An interaction with hdac9 region spans residues 1–100 (MGRKKIQIQR…KGFNGCDSPE (100 aa)). The MADS-box domain maps to 3–57 (RKKIQIQRITDERNRQVTFTKRKFGLMKKAYELSVLCDCEIALIIFNHSNKLFQY). Positions 58-86 (ASTDMDKVLLKYTEYNEPHESRTNADIIE) form a DNA-binding region, mef2-type. Disordered regions lie at residues 173-215 (LTDP…NSNG), 243-267 (LGKVIQAKSPPSPNQNSQLGANSRK), and 411-498 (SIKR…AWVT). The span at 412–424 (IKREPASPNRERS) shows a compositional bias: basic and acidic residues. Composition is skewed to polar residues over residues 425–434 (TGTPLSCFSH) and 447–457 (DSLSSNASSFE).

This sequence belongs to the MEF2 family. In terms of assembly, binds DNA as a multimer, probably as a dimer. Interacts with hdac9. As to expression, restricted to the somitic mesoderm of early embryos and to the body muscle (myotomes) of the tadpole. Expressed in all tissues examined in the adult.

It is found in the nucleus. Its function is as follows. May regulate muscle-specific transcription in the embryo and may regulate transcription of a variety of cell types in the adult. It binds to the sequence 5'-CTA[TA]4TAR-3'. The chain is Myocyte-specific enhancer factor 2D homolog (mef2d) from Xenopus laevis (African clawed frog).